The following is a 485-amino-acid chain: Glutamyl-tRNA(Gln) amidotransferase subunit A (485 aa).

Residues Lys76 and Ser151 each act as charge relay system in the active site. Residue Ser175 is the Acyl-ester intermediate of the active site.

This sequence belongs to the amidase family. GatA subfamily. In terms of assembly, heterotrimer of A, B and C subunits.

It carries out the reaction L-glutamyl-tRNA(Gln) + L-glutamine + ATP + H2O = L-glutaminyl-tRNA(Gln) + L-glutamate + ADP + phosphate + H(+). Functionally, allows the formation of correctly charged Gln-tRNA(Gln) through the transamidation of misacylated Glu-tRNA(Gln) in organisms which lack glutaminyl-tRNA synthetase. The reaction takes place in the presence of glutamine and ATP through an activated gamma-phospho-Glu-tRNA(Gln). The chain is Glutamyl-tRNA(Gln) amidotransferase subunit A from Thiobacillus denitrificans (strain ATCC 25259 / T1).